Here is a 382-residue protein sequence, read N- to C-terminus: Inactive anthranilate O-methyltransferase 1 (382 aa).

Positions 20, 61, 66, 102, 103, 146, and 147 each coordinate S-adenosyl-L-homocysteine. Residues Glu-268 and Phe-270 each contribute to the Mg(2+) site.

The protein belongs to the methyltransferase superfamily. Type-7 methyltransferase family. SABATH subfamily.

This chain is Inactive anthranilate O-methyltransferase 1 (AAMT1I), found in Zea mays (Maize).